The following is a 961-amino-acid chain: Vinculin (961 aa).

Repeat copies occupy residues 258-362 and 371-470. The segment at 258-470 is 2 X repeats; that stretch reads ELDNLTVLKK…LTQKLYELKA (213 aa). The tract at residues 720–778 is disordered; sequence AIAPPQPPPLPTSLPPPIPELSALHLSNQNAERAPPRPPLPREGLAPVRPPPPETDDED. The segment covering 723 to 738 has biased composition (pro residues); the sequence is PPQPPPLPTSLPPPIP. A Phosphothreonine modification is found at Thr774.

This sequence belongs to the vinculin/alpha-catenin family. In terms of assembly, exhibits self-association properties.

The protein localises to the cytoplasm. Its subcellular location is the cytoskeleton. It is found in the cell junction. It localises to the adherens junction. The protein resides in the cell membrane. Its function is as follows. Involved in cell adhesion. May be involved in the attachment of the actin-based microfilaments to the plasma membrane. The polypeptide is Vinculin (Vinc) (Drosophila melanogaster (Fruit fly)).